The primary structure comprises 139 residues: D-ribose pyranase (139 aa).

The active-site Proton donor is the histidine 20. Substrate is bound by residues aspartate 28, histidine 106, and 128–130 (YAN).

The protein belongs to the RbsD / FucU family. RbsD subfamily. As to quaternary structure, homodecamer.

The protein localises to the cytoplasm. The catalysed reaction is beta-D-ribopyranose = beta-D-ribofuranose. It participates in carbohydrate metabolism; D-ribose degradation; D-ribose 5-phosphate from beta-D-ribopyranose: step 1/2. Its function is as follows. Catalyzes the interconversion of beta-pyran and beta-furan forms of D-ribose. This Edwardsiella ictaluri (strain 93-146) protein is D-ribose pyranase.